The following is a 910-amino-acid chain: Protein translocase subunit SecA (910 aa).

ATP is bound by residues Gln89, 107-111, and Asp502; that span reads GEGKT. Zn(2+) is bound by residues Cys894, Cys896, Cys905, and His906.

It belongs to the SecA family. Monomer and homodimer. Part of the essential Sec protein translocation apparatus which comprises SecA, SecYEG and auxiliary proteins SecDF-YajC and YidC. Zn(2+) is required as a cofactor.

The protein resides in the cell inner membrane. It is found in the cytoplasm. It carries out the reaction ATP + H2O + cellular proteinSide 1 = ADP + phosphate + cellular proteinSide 2.. Functionally, part of the Sec protein translocase complex. Interacts with the SecYEG preprotein conducting channel. Has a central role in coupling the hydrolysis of ATP to the transfer of proteins into and across the cell membrane, serving both as a receptor for the preprotein-SecB complex and as an ATP-driven molecular motor driving the stepwise translocation of polypeptide chains across the membrane. The chain is Protein translocase subunit SecA from Mesorhizobium japonicum (strain LMG 29417 / CECT 9101 / MAFF 303099) (Mesorhizobium loti (strain MAFF 303099)).